A 400-amino-acid polypeptide reads, in one-letter code: Homoserine O-acetyltransferase (400 aa).

Residues 1 to 11 (MVKVQSIQSQA) show a composition bias toward polar residues. The disordered stretch occupies residues 1–24 (MVKVQSIQSQAVHAEERAHEADHP). Residues 13 to 23 (HAEERAHEADH) are compositionally biased toward basic and acidic residues. The 310-residue stretch at 64 to 373 (NAILVCHALT…TDRGHDAFLL (310 aa)) folds into the AB hydrolase-1 domain. The active-site Nucleophile is serine 169. Substrate is bound at residue arginine 239. Residues aspartate 335 and histidine 368 contribute to the active site. Aspartate 369 is a binding site for substrate.

It belongs to the AB hydrolase superfamily. MetX family. In terms of assembly, homodimer.

The protein resides in the cytoplasm. The catalysed reaction is L-homoserine + acetyl-CoA = O-acetyl-L-homoserine + CoA. The protein operates within amino-acid biosynthesis; L-methionine biosynthesis via de novo pathway; O-acetyl-L-homoserine from L-homoserine: step 1/1. Transfers an acetyl group from acetyl-CoA to L-homoserine, forming acetyl-L-homoserine. This Rhodopseudomonas palustris (strain BisB18) protein is Homoserine O-acetyltransferase.